The following is a 109-amino-acid chain: Thiosulfate sulfurtransferase GlpE (109 aa).

The 89-residue stretch at 16–104 folds into the Rhodanese domain; it reads REQGAVVVDV…WRTTFPSETA (89 aa). The active-site Cysteine persulfide intermediate is Cys64.

Belongs to the GlpE family.

Its subcellular location is the cytoplasm. The enzyme catalyses thiosulfate + hydrogen cyanide = thiocyanate + sulfite + 2 H(+). It carries out the reaction thiosulfate + [thioredoxin]-dithiol = [thioredoxin]-disulfide + hydrogen sulfide + sulfite + 2 H(+). In terms of biological role, transferase that catalyzes the transfer of sulfur from thiosulfate to thiophilic acceptors such as cyanide or dithiols. May function in a CysM-independent thiosulfate assimilation pathway by catalyzing the conversion of thiosulfate to sulfite, which can then be used for L-cysteine biosynthesis. The polypeptide is Thiosulfate sulfurtransferase GlpE (Pseudomonas fluorescens (strain Pf0-1)).